Here is a 504-residue protein sequence, read N- to C-terminus: ATP synthase subunit beta (504 aa).

The interval 1-23 (MAKAATPKETAAAKKPAAPKKAA) is disordered. An ATP-binding site is contributed by 182 to 189 (GGAGVGKT).

This sequence belongs to the ATPase alpha/beta chains family. In terms of assembly, F-type ATPases have 2 components, CF(1) - the catalytic core - and CF(0) - the membrane proton channel. CF(1) has five subunits: alpha(3), beta(3), gamma(1), delta(1), epsilon(1). CF(0) has three main subunits: a(1), b(2) and c(9-12). The alpha and beta chains form an alternating ring which encloses part of the gamma chain. CF(1) is attached to CF(0) by a central stalk formed by the gamma and epsilon chains, while a peripheral stalk is formed by the delta and b chains.

Its subcellular location is the cell inner membrane. The catalysed reaction is ATP + H2O + 4 H(+)(in) = ADP + phosphate + 5 H(+)(out). In terms of biological role, produces ATP from ADP in the presence of a proton gradient across the membrane. The catalytic sites are hosted primarily by the beta subunits. The chain is ATP synthase subunit beta from Rhizobium meliloti (strain 1021) (Ensifer meliloti).